The sequence spans 96 residues: Large ribosomal subunit protein eL43 (96 aa).

Residues 39–60 form a C4-type zinc finger; the sequence is CTFCGKTATKRTCVGIWKCKKC.

This sequence belongs to the eukaryotic ribosomal protein eL43 family. Component of the large ribosomal subunit. Mature ribosomes consist of a small (40S) and a large (60S) subunit. The 40S subunit contains about 32 different proteins and 1 molecule of RNA (18S). The 60S subunit contains about 42 different proteins and 3 molecules of RNA (28S, 5.8S and 5S).

The protein localises to the cytoplasm. Its function is as follows. Component of the ribosome, a large ribonucleoprotein complex responsible for the synthesis of proteins in the cell. The small ribosomal subunit (SSU) binds messenger RNAs (mRNAs) and translates the encoded message by selecting cognate aminoacyl-transfer RNA (tRNA) molecules. The large subunit (LSU) contains the ribosomal catalytic site termed the peptidyl transferase center (PTC), which catalyzes the formation of peptide bonds, thereby polymerizing the amino acids delivered by tRNAs into a polypeptide chain. The nascent polypeptides leave the ribosome through a tunnel in the LSU and interact with protein factors that function in enzymatic processing, targeting, and the membrane insertion of nascent chains at the exit of the ribosomal tunnel. The polypeptide is Large ribosomal subunit protein eL43 (Plasmodium falciparum (isolate 3D7)).